The sequence spans 767 residues: Integrin beta-8 (767 aa).

The first 21 residues, 1 to 21, serve as a signal peptide directing secretion; that stretch reads MCGSALAFLTAALLSLHNCQR. The Extracellular portion of the chain corresponds to 22–681; that stretch reads GPALVLGAAW…SECLSGPSYL (660 aa). In terms of domain architecture, PSI spans 46–95; sequence RCGSANVVSCARCLQLGPECGWCVQEDFVSGGSGSERCDTVSSLISKGCP. Intrachain disulfides connect cysteine 47–cysteine 65, cysteine 55–cysteine 469, cysteine 58–cysteine 83, cysteine 68–cysteine 94, cysteine 211–cysteine 218, cysteine 266–cysteine 307, cysteine 407–cysteine 419, cysteine 439–cysteine 467, cysteine 471–cysteine 490, cysteine 471–cysteine 493, cysteine 481–cysteine 493, cysteine 498–cysteine 527, cysteine 510–cysteine 525, cysteine 519–cysteine 530, cysteine 532–cysteine 545, cysteine 552–cysteine 566, cysteine 560–cysteine 571, cysteine 573–cysteine 582, cysteine 584–cysteine 608, cysteine 592–cysteine 606, cysteine 600–cysteine 611, cysteine 613–cysteine 623, cysteine 626–cysteine 629, cysteine 633–cysteine 660, and cysteine 639–cysteine 656. Residues 146–384 form the VWFA domain; sequence PVDLYYLVDV…NLVVEAYKKI (239 aa). Aspartate 154 and serine 156 together coordinate Mg(2+). Aspartate 193 contributes to the Ca(2+) binding site. N-linked (GlcNAc...) asparagine glycosylation is present at asparagine 233. Residues asparagine 249, aspartate 251, proline 253, and glutamate 254 each contribute to the Ca(2+) site. Glutamate 254 provides a ligand contact to Mg(2+). Asparagine 402 carries N-linked (GlcNAc...) asparagine glycosylation. Asparagine 421, asparagine 431, and asparagine 456 each carry an N-linked (GlcNAc...) asparagine glycan. I-EGF domains follow at residues 471-494, 498-546, 547-583, and 584-624; these read CENH…PQCD, CHFD…QYCE, KDDF…DRCQ, and CPSA…RLCE. An N-linked (GlcNAc...) asparagine glycan is attached at asparagine 647. The helical transmembrane segment at 682 to 702 threads the bilayer; sequence RIFFIIFIVTFLIGLLKVLII. At 703–767 the chain is on the cytoplasmic side; the sequence is RQVILQWNNN…NAQEAFRCNF (65 aa).

This sequence belongs to the integrin beta chain family. As to quaternary structure, heterodimer of an alpha and a beta subunit. Beta-8 (ITGB8) associates with alpha-V (ITGAV) to form ITGAV:ITGB8. ITGAV:ITGB8 interacts with TGFB1.

The protein resides in the cell membrane. Integrin alpha-V:beta-8 (ITGAV:ITGB8) is a receptor for fibronectin. It recognizes the sequence R-G-D in its ligands. Integrin alpha-V:beta-6 (ITGAV:ITGB6) mediates R-G-D-dependent release of transforming growth factor beta-1 (TGF-beta-1) from regulatory Latency-associated peptide (LAP), thereby playing a key role in TGF-beta-1 activation on the surface of activated regulatory T-cells (Tregs). Required during vasculogenesis. The sequence is that of Integrin beta-8 from Mus musculus (Mouse).